Consider the following 322-residue polypeptide: Ribokinase (322 aa).

Substrate contacts are provided by residues 25–27 (MTD), 53–57 (GKGAN), and Glu154. Residues Asn199, 235–240 (TLGAEG), and Thr256 contribute to the ATP site. K(+) contacts are provided by Asp263 and Thr265. ATP-binding positions include 268–269 (GD) and Asn295. Position 269 (Asp269) interacts with substrate. The active-site Proton acceptor is the Asp269. The K(+) site is built by Ser301, Ala304, Gly306, and Ser310.

Belongs to the carbohydrate kinase PfkB family. Ribokinase subfamily. Homodimer. Requires Mg(2+) as cofactor.

The protein resides in the cytoplasm. It is found in the nucleus. It carries out the reaction D-ribose + ATP = D-ribose 5-phosphate + ADP + H(+). The protein operates within carbohydrate metabolism; D-ribose degradation; D-ribose 5-phosphate from beta-D-ribopyranose: step 2/2. Its activity is regulated as follows. Activated by a monovalent cation that binds near, but not in, the active site. The most likely occupant of the site in vivo is potassium. Ion binding induces a conformational change that may alter substrate affinity. Competitively inhibited by phosphonoacetic acid, etidronate, 2-carboxethylphosphonic acid, N-(phosphonomethyl)glycine, N-(phosphonomethyl)iminodiacetic acid and clodronate. In terms of biological role, catalyzes the phosphorylation of ribose at O-5 in a reaction requiring ATP and magnesium. The resulting D-ribose-5-phosphate can then be used either for sythesis of nucleotides, histidine, and tryptophan, or as a component of the pentose phosphate pathway. The protein is Ribokinase of Homo sapiens (Human).